A 364-amino-acid chain; its full sequence is DNA polymerase processivity factor (364 aa).

3 disordered regions span residues 1–24 (MDRS…KEPP), 284–306 (DDPK…KVEE), and 325–364 (VPTK…RCGM).

It belongs to the herpesviridae polymerase accessory protein family.

Accessory subunit of the DNA polymerase that acts to increase the processivity of polymerization. This is DNA polymerase processivity factor (U27) from Homo sapiens (Human).